Reading from the N-terminus, the 4882-residue chain is Dual E2 ubiquitin-conjugating enzyme/E3 ubiquitin-protein ligase BIRC6 (4882 aa).

2 WD repeats span residues 71 to 109 (DGLH…QASA) and 110 to 139 (LSAK…AVGC). The BIR repeat unit spans residues 292 to 362 (RRETFTSWPH…RHSPNCPFVK (71 aa)). The Zn(2+) site is built by Cys-331, Cys-334, His-351, and Cys-358. The WD 3 repeat unit spans residues 382-429 (LPSADGADRIACFGSGSCPQFLAAATKRGKICIWDVSKLMKVHLKFEI). Disordered stretches follow at residues 468 to 502 (DIPK…SQKE), 542 to 561 (GANP…KHQE), and 582 to 622 (ATSP…SELN). Residues 475 to 485 (DSDDLLEDSDS) are compositionally biased toward acidic residues. Phosphoserine occurs at positions 476, 483, and 485. WD repeat units follow at residues 504 to 723 (MEVS…VQCL), 733 to 854 (TLCI…QHIK), 855 to 931 (DPQD…AKVE), and 932 to 970 (PPKK…FLQI). Residues 551–561 (KSEKTKEKHQE) show a composition bias toward basic and acidic residues. Polar residues predominate over residues 582-591 (ATSPISSNSH). 2 positions are modified to phosphoserine: Ser-584 and Ser-593. Residues 598–622 (SRTQGESISEQGSTDNESCTNSELN) are compositionally biased toward polar residues. The tract at residues 1057–1077 (QQQRRHPQHLHQQHHGDAAQH) is disordered. Residues 1060 to 1069 (RRHPQHLHQQ) show a composition bias toward basic residues. Thr-1724 is modified (phosphothreonine). 2 positions are modified to phosphoserine: Ser-2245 and Ser-2978. Positions 2969–2998 (VTTNTTDSVSDEEKVSGGKDVNGSSASTPG) are disordered. Positions 3212 to 3216 (HRRAR) are HRRAR loop; important for DIABLO/SMAC and HTRA2 binding. In terms of domain architecture, Ubiquitin-like spans 3842–4092 (DEKVTMFLQS…ESLLETCPIQ (251 aa)). Disordered regions lie at residues 3908-3927 (SEQK…KVKA) and 3943-3973 (LKSQ…IGSA). Thr-3954 bears the Phosphothreonine mark. Ser-4047 is modified (phosphoserine). Residues 4285–4304 (VPNSSLSQTEPQVSNSHNPT) are disordered. The segment covering 4286–4304 (PNSSLSQTEPQVSNSHNPT) has biased composition (polar residues). The UBC core domain maps to 4598-4765 (ARARRLAQEA…IRQATVKWAM (168 aa)). The Glycyl thioester intermediate role is filled by Cys-4691. The segment at 4857–4882 (AGAEDTLTHDHVNPSSSKDLPSDFQL) is disordered. Residues 4869 to 4882 (NPSSSKDLPSDFQL) are compositionally biased toward polar residues.

It belongs to the BIRC6 family. As to quaternary structure, homodimer; antiparallel. Interacts with DIABLO/SMAC, likely with higher affinity to SMAC dimer than SMAC monomer; this interaction blocks the substrate-binding site and inhibits the caspase inhibition activity of BIRC6. Interacts with RNF41, KIF23/MKLP1, USP8/UBPY, BIRC5/survivin, MAP2K1/MEK1, RAB8A/RAB8, RAB11A/RAB11, PLK1, EXOC3/SEC6 and EXOC4/SEC8. Ubiquitinated. Ubiquitination is mediated by RNF41 E3 ligase and leads to proteasomal degradation, impairing inhibition of apoptosis. Deubiquitinated by USP8/UBPY. Autoubiquitinated; mediated by E1 ubiquitin activating enzyme UBA6. Post-translationally, proteolytically cleaved. Acts as substrate for CASP3, CASP6, CASP7, CASP9 and HTRA2. In terms of tissue distribution, widely expressed. Highly expressed in the brain and kidney.

It is found in the golgi apparatus. Its subcellular location is the trans-Golgi network membrane. It localises to the endosome. The protein localises to the cytoplasm. The protein resides in the cytoskeleton. It is found in the spindle pole. Its subcellular location is the microtubule organizing center. It localises to the centrosome. The protein localises to the midbody. The protein resides in the midbody ring. The enzyme catalyses S-ubiquitinyl-[E1 ubiquitin-activating enzyme]-L-cysteine + [acceptor protein]-L-lysine = [E1 ubiquitin-activating enzyme]-L-cysteine + N(6)-monoubiquitinyl-[acceptor protein]-L-lysine.. Its activity is regulated as follows. Inhibited by DIABLO/SMAC, which competes for the substrate-binding sites on BIRC6. BIRC6 inhibits caspases and protease by ubiquitination but BIRC6 itself is subjected to protease cleavage by CASP3, CASP6, CASP7, CASP9 and HTRA2 by protease cleavage. Functionally, anti-apoptotic protein known as inhibitor of apoptosis (IAP) which can regulate cell death by controlling caspases and by acting as an E3 ubiquitin-protein ligase. Unlike most IAPs, does not contain a RING domain and it is not a RING-type E3 ligase. Instead acts as a dual E2/E3 enzyme that combines ubiquitin conjugating (E2) and ubiquitin ligase (E3) activities in a single polypeptide. Ubiquitination is mediated by a non-canonical E1 ubiquitin activating enzyme UBA6. Ubiquitinates CASP3, CASP7 and CASP9 and inhibits their caspase activity; also ubiquitinates their procaspases but to a weaker extent. Ubiquitinates pro-apoptotic factors DIABLO/SMAC and HTRA2. DIABLO/SMAC antagonizes the caspase inhibition activity of BIRC6 by competing for the same binding sites as the caspases. Ubiquitinates the autophagy protein MAP1LC3B; this activity is also inhibited by DIABLO/SMAC. Important regulator for the final stages of cytokinesis. Crucial for normal vesicle targeting to the site of abscission, but also for the integrity of the midbody and the midbody ring, and its striking ubiquitin modification. Required for normal placenta development. The chain is Dual E2 ubiquitin-conjugating enzyme/E3 ubiquitin-protein ligase BIRC6 (Birc6) from Mus musculus (Mouse).